The sequence spans 231 residues: Probable glutathione S-transferase GSTU1 (231 aa).

The GST N-terminal domain occupies 5 to 84 (KELVLLDFWV…YLDDAFPGTP (80 aa)). Glutathione-binding positions include Ser15, Lys42, Ile56, and 68–69 (ES). A GST C-terminal domain is found at 97 to 220 (AAYARATARF…LPSPEKVYDF (124 aa)).

It belongs to the GST superfamily. Tau family.

It catalyses the reaction RX + glutathione = an S-substituted glutathione + a halide anion + H(+). Its function is as follows. Conjugation of reduced glutathione to a wide number of exogenous and endogenous hydrophobic electrophiles. The sequence is that of Probable glutathione S-transferase GSTU1 (GSTU1) from Oryza sativa subsp. japonica (Rice).